The chain runs to 132 residues: Glycine cleavage system H protein (132 aa).

Positions 24 to 106 constitute a Lipoyl-binding domain; it reads TVRVGITDFA…YGAGWLLDVQ (83 aa). N6-lipoyllysine is present on Lys65.

This sequence belongs to the GcvH family. As to quaternary structure, the glycine cleavage system is composed of four proteins: P, T, L and H. The cofactor is (R)-lipoate.

Its function is as follows. The glycine cleavage system catalyzes the degradation of glycine. The H protein shuttles the methylamine group of glycine from the P protein to the T protein. The chain is Glycine cleavage system H protein from Mycobacterium avium (strain 104).